A 389-amino-acid polypeptide reads, in one-letter code: Na(+)/H(+) antiporter NhaA 1 (389 aa).

Transmembrane regions (helical) follow at residues 12–32 (VLNE…ALLV), 62–82 (FLLW…GLEL), 97–117 (IVLP…LFAL), 128–148 (GWAI…MMCG), 157–177 (IFLL…IAIF), 184–204 (IVAF…NILG), 220–240 (ISVL…AFFI), 260–280 (FWLA…VNLS), 282–302 (IDIG…LFVG), 331–351 (LYGV…IDGL), and 365–385 (LAIL…LKFF).

The protein belongs to the NhaA Na(+)/H(+) (TC 2.A.33) antiporter family.

It is found in the cell inner membrane. It carries out the reaction Na(+)(in) + 2 H(+)(out) = Na(+)(out) + 2 H(+)(in). Its function is as follows. Na(+)/H(+) antiporter that extrudes sodium in exchange for external protons. The chain is Na(+)/H(+) antiporter NhaA 1 from Campylobacter jejuni subsp. jejuni serotype O:6 (strain 81116 / NCTC 11828).